The sequence spans 453 residues: Bifunctional protein GlmU (453 aa).

The tract at residues 1–225 is pyrophosphorylase; the sequence is MNIVILAAGT…EWETLGVNSK (225 aa). Residues 6–9, Lys20, Gln71, 76–77, 98–100, Gly135, Glu150, Asn165, and Asn223 each bind UDP-N-acetyl-alpha-D-glucosamine; these read LAAG, GT, and YGD. Residue Asp100 coordinates Mg(2+). Asn223 is a Mg(2+) binding site. The tract at residues 226 to 246 is linker; sequence QQLAELERIHQRNVADDLLVA. The segment at 247-453 is N-acetyltransferase; it reads GVTIADPARI…GYVRPTKKKS (207 aa). Positions 329 and 347 each coordinate UDP-N-acetyl-alpha-D-glucosamine. Catalysis depends on His359, which acts as the Proton acceptor. The UDP-N-acetyl-alpha-D-glucosamine site is built by Tyr362 and Asn373. Acetyl-CoA contacts are provided by residues Ala376, 382–383, Ser401, and Ala419; that span reads NY.

This sequence in the N-terminal section; belongs to the N-acetylglucosamine-1-phosphate uridyltransferase family. It in the C-terminal section; belongs to the transferase hexapeptide repeat family. As to quaternary structure, homotrimer. Mg(2+) is required as a cofactor.

Its subcellular location is the cytoplasm. The catalysed reaction is alpha-D-glucosamine 1-phosphate + acetyl-CoA = N-acetyl-alpha-D-glucosamine 1-phosphate + CoA + H(+). It catalyses the reaction N-acetyl-alpha-D-glucosamine 1-phosphate + UTP + H(+) = UDP-N-acetyl-alpha-D-glucosamine + diphosphate. It participates in nucleotide-sugar biosynthesis; UDP-N-acetyl-alpha-D-glucosamine biosynthesis; N-acetyl-alpha-D-glucosamine 1-phosphate from alpha-D-glucosamine 6-phosphate (route II): step 2/2. It functions in the pathway nucleotide-sugar biosynthesis; UDP-N-acetyl-alpha-D-glucosamine biosynthesis; UDP-N-acetyl-alpha-D-glucosamine from N-acetyl-alpha-D-glucosamine 1-phosphate: step 1/1. Its pathway is bacterial outer membrane biogenesis; LPS lipid A biosynthesis. In terms of biological role, catalyzes the last two sequential reactions in the de novo biosynthetic pathway for UDP-N-acetylglucosamine (UDP-GlcNAc). The C-terminal domain catalyzes the transfer of acetyl group from acetyl coenzyme A to glucosamine-1-phosphate (GlcN-1-P) to produce N-acetylglucosamine-1-phosphate (GlcNAc-1-P), which is converted into UDP-GlcNAc by the transfer of uridine 5-monophosphate (from uridine 5-triphosphate), a reaction catalyzed by the N-terminal domain. The chain is Bifunctional protein GlmU from Paraburkholderia phymatum (strain DSM 17167 / CIP 108236 / LMG 21445 / STM815) (Burkholderia phymatum).